A 495-amino-acid chain; its full sequence is Cardiolipin synthase A (495 aa).

The next 2 helical transmembrane spans lie at 9–29 and 46–66; these read IEVL…WLIT and MAWL…YLLL. PLD phosphodiesterase domains follow at residues 227 to 254 and 408 to 435; these read MDLR…IDPK and EGGL…DMRS. Active-site residues include His-232, Lys-234, Asp-239, His-413, Lys-415, and Asp-420.

Belongs to the phospholipase D family. Cardiolipin synthase subfamily. ClsA sub-subfamily.

It is found in the cell membrane. It catalyses the reaction 2 a 1,2-diacyl-sn-glycero-3-phospho-(1'-sn-glycerol) = a cardiolipin + glycerol. In terms of biological role, catalyzes the reversible phosphatidyl group transfer from one phosphatidylglycerol molecule to another to form cardiolipin (CL) (diphosphatidylglycerol) and glycerol. The polypeptide is Cardiolipin synthase A (Wigglesworthia glossinidia brevipalpis).